Reading from the N-terminus, the 369-residue chain is tRNA 2-selenouridine synthase (369 aa).

Positions 12–136 constitute a Rhodanese domain; it reads FLDDIPLMDV…LRNFLFETTR (125 aa). Cys-95 (S-selanylcysteine intermediate) is an active-site residue.

Belongs to the SelU family. As to quaternary structure, monomer.

It catalyses the reaction 5-methylaminomethyl-2-thiouridine(34) in tRNA + selenophosphate + (2E)-geranyl diphosphate + H2O + H(+) = 5-methylaminomethyl-2-selenouridine(34) in tRNA + (2E)-thiogeraniol + phosphate + diphosphate. The enzyme catalyses 5-methylaminomethyl-2-thiouridine(34) in tRNA + (2E)-geranyl diphosphate = 5-methylaminomethyl-S-(2E)-geranyl-thiouridine(34) in tRNA + diphosphate. It carries out the reaction 5-methylaminomethyl-S-(2E)-geranyl-thiouridine(34) in tRNA + selenophosphate + H(+) = 5-methylaminomethyl-2-(Se-phospho)selenouridine(34) in tRNA + (2E)-thiogeraniol. The catalysed reaction is 5-methylaminomethyl-2-(Se-phospho)selenouridine(34) in tRNA + H2O = 5-methylaminomethyl-2-selenouridine(34) in tRNA + phosphate. Functionally, involved in the post-transcriptional modification of the uridine at the wobble position (U34) of tRNA(Lys), tRNA(Glu) and tRNA(Gln). Catalyzes the conversion of 2-thiouridine (S2U-RNA) to 2-selenouridine (Se2U-RNA). Acts in a two-step process involving geranylation of 2-thiouridine (S2U) to S-geranyl-2-thiouridine (geS2U) and subsequent selenation of the latter derivative to 2-selenouridine (Se2U) in the tRNA chain. The protein is tRNA 2-selenouridine synthase of Pseudomonas aeruginosa (strain LESB58).